The chain runs to 90 residues: Protein LURE 1.2 (90 aa).

Residues 1-19 (MKLPIIFLTLLIFVSSCTS) form the signal peptide. Asparagine 23 carries an N-linked (GlcNAc...) asparagine glycan. 3 cysteine pairs are disulfide-bonded: cysteine 58-cysteine 75, cysteine 61-cysteine 82, and cysteine 65-cysteine 84. Residues 67–87 (RRGKYIRTCSFERKLCRCSIS) are PRK6 binding.

It belongs to the DEFL family. As to quaternary structure, interacts with MDIS1, MIK1, MIK2 and TDR/PXY, but not with MDIS2. Binds to PRK6 LRRs. As to expression, expressed in the pistil. Detected exclusively in the synergid cells.

The protein resides in the secreted. Its function is as follows. Pollen tube attractants guiding pollen tubes to the ovular micropyle. Attracts specifically pollen tubes from A.thaliana, but not those from A.lyrata. Triggers endocytosis of MDIS1 in the pollen tube tip. This is Protein LURE 1.2 from Arabidopsis thaliana (Mouse-ear cress).